The following is a 1127-amino-acid chain: Cellulose synthase-like protein D1 (1127 aa).

Residues 1–24 (MASKGILKNGGKPPTAPSSAAPTV) form a disordered region. The next 2 membrane-spanning stretches (helical) occupy residues 262–282 (VISP…LFLM) and 292–312 (AIWL…SWVL). Active-site residues include Asp-392 and Asp-828. The next 6 membrane-spanning stretches (helical) occupy residues 910-930 (VFLI…QFIV), 936-956 (TFLT…MLEI), 982-1002 (LAAV…SFTL), 1025-1045 (SLMI…AVGF), 1059-1079 (LLGG…FAKG), and 1089-1109 (TIVY…WIAI).

This sequence belongs to the glycosyltransferase 2 family. Plant cellulose synthase-like D subfamily.

Its subcellular location is the golgi apparatus membrane. Its function is as follows. Thought to be a Golgi-localized beta-glycan synthase that polymerize the backbones of noncellulosic polysaccharides (hemicelluloses) of plant cell wall. In Oryza sativa subsp. indica (Rice), this protein is Cellulose synthase-like protein D1 (CSLD1).